A 487-amino-acid polypeptide reads, in one-letter code: MMHDALFERFSARLKAQVGPEVYASWFARLKLHTVSKSVVRFTVPTTFLKSWINNRYMDLITSLVQSEDPDVLKVEILVRSASRPVRPAQTEERAQPVQEVGAAPRNKSFIPSQSATAPAAQPMAAQATLRQGGSGPLFGSPLDTRFTFDTFVEGSSNRVALAAAKTIAEAGAGAVRFNPLFIHAGVGLGKTHLLQAIANAAIDSPRNPRVVYLTAEYFMWRFATAIRDNDALTLKDTLRNIDLLVIDDMQFLQGKMIQHEFCHLLNMLLDSAKQVVVAADRAPWELESLDPRVRSRLQGGMAIEIEGPDYDMRYEMLNRRMGSARQDDPSFEISDEILTHVAKSVTASGRELEGAFNQLMFRRSFEPNLSVDRVDELLSHLVGSGEAKRVRIEDIQRIVARHYNVSRQELVSNRRTRVIVKPRQIAMYLAKMLTPRSFPEIGRRFGGRDHTTVLHAVRKIEDLISGDTKLGHEVELLKRLINENNA.

The interval 1–71 (MMHDALFERF…TSLVQSEDPD (71 aa)) is domain I, interacts with DnaA modulators. A domain II region spans residues 71-141 (DVLKVEILVR…QGGSGPLFGS (71 aa)). A domain III, AAA+ region region spans residues 142 to 364 (PLDTRFTFDT…GAFNQLMFRR (223 aa)). Gly188, Gly190, Lys191, and Thr192 together coordinate ATP. Residues 365–487 (SFEPNLSVDR…LKRLINENNA (123 aa)) form a domain IV, binds dsDNA region.

It belongs to the DnaA family. In terms of assembly, oligomerizes as a right-handed, spiral filament on DNA at oriC.

The protein localises to the cytoplasm. Its function is as follows. Plays an essential role in the initiation and regulation of chromosomal replication. ATP-DnaA binds to the origin of replication (oriC) to initiate formation of the DNA replication initiation complex once per cell cycle. Binds the DnaA box (a 9 base pair repeat at the origin) and separates the double-stranded (ds)DNA. Forms a right-handed helical filament on oriC DNA; dsDNA binds to the exterior of the filament while single-stranded (ss)DNA is stabiized in the filament's interior. The ATP-DnaA-oriC complex binds and stabilizes one strand of the AT-rich DNA unwinding element (DUE), permitting loading of DNA polymerase. After initiation quickly degrades to an ADP-DnaA complex that is not apt for DNA replication. Binds acidic phospholipids. The chain is Chromosomal replication initiator protein DnaA from Agrobacterium fabrum (strain C58 / ATCC 33970) (Agrobacterium tumefaciens (strain C58)).